A 620-amino-acid chain; its full sequence is Sterile alpha motif domain-containing protein 15 (620 aa).

Positions 1–394 (MSEVSGDYNS…PNYPAGKDKL (394 aa)) are disordered. Basic and acidic residues-rich tracts occupy residues 62–83 (TRTRKGDLVPVGKNHEVPDLQR), 106–125 (IDPEQKTPDIRSEKLRKSVE), and 135–180 (TKSE…HFKS). A compositionally biased stretch (polar residues) spans 181–191 (TEQSGTEQPEQ). Positions 233 to 242 (RPLKASKKAQ) are enriched in basic residues. Residues 261–270 (LLDDQEETQE) show a composition bias toward acidic residues. Composition is skewed to basic and acidic residues over residues 271 to 286 (ESIKEKVPEPLGDRKP), 295 to 315 (KSSERSKLKDTLIEPSKDKDP), 323 to 337 (FPKEKLIKTTEKTGD), and 347 to 382 (IQEKSQPEPTEKNLELPNKPKPEEERDLPKEDKPES). Positions 480-543 (WSPERVAEWI…SYHTRVLLGI (64 aa)) constitute an SAM domain. Over residues 594-604 (EIKAEEKKEDA) the composition is skewed to basic and acidic residues. The tract at residues 594–620 (EIKAEEKKEDALPENSLEENEELYEAT) is disordered. Acidic residues predominate over residues 609–620 (SLEENEELYEAT).

This chain is Sterile alpha motif domain-containing protein 15 (Samd15), found in Mus musculus (Mouse).